Here is a 252-residue protein sequence, read N- to C-terminus: Type III pantothenate kinase (252 aa).

Residue 6–13 (DIGNTTTE) coordinates ATP. Residues tyrosine 100 and 107–110 (GADR) contribute to the substrate site. The active-site Proton acceptor is the aspartate 109. Position 129 (aspartate 129) interacts with K(+). Residue threonine 132 participates in ATP binding. Threonine 184 contributes to the substrate binding site.

The protein belongs to the type III pantothenate kinase family. As to quaternary structure, homodimer. Requires NH4(+) as cofactor. K(+) is required as a cofactor.

The protein localises to the cytoplasm. It carries out the reaction (R)-pantothenate + ATP = (R)-4'-phosphopantothenate + ADP + H(+). It participates in cofactor biosynthesis; coenzyme A biosynthesis; CoA from (R)-pantothenate: step 1/5. Its function is as follows. Catalyzes the phosphorylation of pantothenate (Pan), the first step in CoA biosynthesis. This chain is Type III pantothenate kinase, found in Sulfurihydrogenibium sp. (strain YO3AOP1).